The chain runs to 419 residues: Histidine--tRNA ligase (419 aa).

It belongs to the class-II aminoacyl-tRNA synthetase family. In terms of assembly, homodimer.

The protein localises to the cytoplasm. The catalysed reaction is tRNA(His) + L-histidine + ATP = L-histidyl-tRNA(His) + AMP + diphosphate + H(+). In Trichlorobacter lovleyi (strain ATCC BAA-1151 / DSM 17278 / SZ) (Geobacter lovleyi), this protein is Histidine--tRNA ligase.